A 631-amino-acid chain; its full sequence is Phosphomethylpyrimidine synthase (631 aa).

Residues N239, M268, Y297, H333, 353 to 355, 394 to 397, and E433 each bind substrate; these read SRG and DGLR. H437 contributes to the Zn(2+) binding site. Substrate is bound at residue Y460. Residue H501 participates in Zn(2+) binding. Residues C581, C584, and C589 each coordinate [4Fe-4S] cluster.

This sequence belongs to the ThiC family. In terms of assembly, homodimer. The cofactor is [4Fe-4S] cluster.

The enzyme catalyses 5-amino-1-(5-phospho-beta-D-ribosyl)imidazole + S-adenosyl-L-methionine = 4-amino-2-methyl-5-(phosphooxymethyl)pyrimidine + CO + 5'-deoxyadenosine + formate + L-methionine + 3 H(+). It participates in cofactor biosynthesis; thiamine diphosphate biosynthesis. Functionally, catalyzes the synthesis of the hydroxymethylpyrimidine phosphate (HMP-P) moiety of thiamine from aminoimidazole ribotide (AIR) in a radical S-adenosyl-L-methionine (SAM)-dependent reaction. This chain is Phosphomethylpyrimidine synthase, found in Escherichia coli O6:H1 (strain CFT073 / ATCC 700928 / UPEC).